The following is a 644-amino-acid chain: uncharacterized protein (644 aa).

The interval 1 to 35 (MKANGLDNDPARTGMERTDIDSEHPEAQPLLNNNH) is disordered. Topologically, residues 1–90 (MKANGLDNDP…ILNILILINT (90 aa)) are cytoplasmic. The span at 14–26 (GMERTDIDSEHPE) shows a compositional bias: basic and acidic residues. 3 positions are modified to phosphoserine: S22, S56, and S63. Residues 91-111 (IWLVTTLISDFFFNINILFGF) traverse the membrane as a helical segment. Residues 112–122 (SNRYASFNDLT) lie on the Vacuolar side of the membrane. The helical transmembrane segment at 123–143 (LIFISIIANSFNLWFNKLGLY) threads the bilayer. The Cytoplasmic portion of the chain corresponds to 144–147 (SALD). The helical transmembrane segment at 148–168 (YSLNVTLCVLTLFNLALTYLI) threads the bilayer. Residues 169–174 (KYTRQR) are Vacuolar-facing. The chain crosses the membrane as a helical span at residues 175–195 (IGFVGTFTYLWTSFSFFIGAI). The Cytoplasmic segment spans residues 196-271 (LDWYLLFYNN…EWVSIGFRNT (76 aa)). The disordered stretch occupies residues 225–251 (NENHTNSTENRDRSQYGSGSPTPTHRS). Over residues 239-251 (QYGSGSPTPTHRS) the composition is skewed to polar residues. The residue at position 244 (S244) is a Phosphoserine. A helical transmembrane segment spans residues 272 to 292 (IKFLILIFFALFTLNTLLTTL). Residues 293–644 (DTYRLTHKLP…IGELGKLTED (352 aa)) lie on the Vacuolar side of the membrane. The region spanning 348 to 619 (PIILFEHGGY…IVEGGHEIYK (272 aa)) is the AB hydrolase-1 domain. The tract at residues 469 to 492 (GRGDGDDGDDGNGNDGDGRNHDKT) is disordered.

Its subcellular location is the vacuole membrane. This is an uncharacterized protein from Saccharomyces cerevisiae (strain ATCC 204508 / S288c) (Baker's yeast).